The sequence spans 271 residues: Putative phosphoenolpyruvate synthase regulatory protein (271 aa).

152-159 (GVSRCGKT) is an ADP binding site.

It belongs to the pyruvate, phosphate/water dikinase regulatory protein family. PSRP subfamily.

It catalyses the reaction [pyruvate, water dikinase] + ADP = [pyruvate, water dikinase]-phosphate + AMP + H(+). It carries out the reaction [pyruvate, water dikinase]-phosphate + phosphate + H(+) = [pyruvate, water dikinase] + diphosphate. Bifunctional serine/threonine kinase and phosphorylase involved in the regulation of the phosphoenolpyruvate synthase (PEPS) by catalyzing its phosphorylation/dephosphorylation. The polypeptide is Putative phosphoenolpyruvate synthase regulatory protein (Legionella pneumophila (strain Corby)).